A 174-amino-acid chain; its full sequence is MKLNKIMLATVLAFGVSSLANAADQGHGKVTFTGSIIDAPCSIAPESADQTVEMGQISNVALKNGGKSAPRQFDIKLEQCDTSTLKTVTTTFDGKASAANPDLLGIIGTASGASIAITDMASNPIKLGTATAPQTLNDGNNTLRFAAYLQGDGASATVVPGDFTAVADFKLAYQ.

The signal sequence occupies residues 1–22 (MKLNKIMLATVLAFGVSSLANA). Residues C41 and C80 are joined by a disulfide bond.

Belongs to the fimbrial protein family.

The protein resides in the fimbrium. Its function is as follows. Major structural component of mannose-resistant fimbriae of Serratia marcescens. The chain is Fimbria A protein (smfA) from Serratia marcescens.